Reading from the N-terminus, the 429-residue chain is Serine hydroxymethyltransferase (429 aa).

Residues leucine 128 and 132 to 134 each bind (6S)-5,6,7,8-tetrahydrofolate; that span reads GHL. N6-(pyridoxal phosphate)lysine is present on lysine 237.

The protein belongs to the SHMT family. As to quaternary structure, homodimer. Requires pyridoxal 5'-phosphate as cofactor.

The protein resides in the cytoplasm. It carries out the reaction (6R)-5,10-methylene-5,6,7,8-tetrahydrofolate + glycine + H2O = (6S)-5,6,7,8-tetrahydrofolate + L-serine. It functions in the pathway one-carbon metabolism; tetrahydrofolate interconversion. Its pathway is amino-acid biosynthesis; glycine biosynthesis; glycine from L-serine: step 1/1. Its function is as follows. Catalyzes the reversible interconversion of serine and glycine with tetrahydrofolate (THF) serving as the one-carbon carrier. This reaction serves as the major source of one-carbon groups required for the biosynthesis of purines, thymidylate, methionine, and other important biomolecules. Also exhibits THF-independent aldolase activity toward beta-hydroxyamino acids, producing glycine and aldehydes, via a retro-aldol mechanism. This chain is Serine hydroxymethyltransferase, found in Caulobacter vibrioides (strain ATCC 19089 / CIP 103742 / CB 15) (Caulobacter crescentus).